The following is a 127-amino-acid chain: Alkaline proteinase inhibitor (127 aa).

Positions 1–26 are cleaved as a signal peptide; that stretch reads MNINYFVRIVPVAVVLLVGISGASMA. C53 and C70 form a disulfide bridge.

Belongs to the protease inhibitor I38 family.

The protein resides in the periplasm. In terms of biological role, inhibitor of the alkaline protease. This chain is Alkaline proteinase inhibitor (inh), found in Pseudomonas syringae pv. tomato (strain ATCC BAA-871 / DC3000).